Consider the following 179-residue polypeptide: SCAN domain-containing protein 1 (179 aa).

A disordered region spans residues 1–107; that stretch reads MAATEPILAT…AGSRLGPETF (107 aa). Residues 52–80 are compositionally biased toward low complexity; that stretch reads SPNAAVPEAIPTPRAAASAALELPLGPAP. Residues 108–166 enclose the SCAN box domain; the sequence is RQRFRQFRYQDAAGPREAFRQLRELSRQWLRPDIRTKEQIVEMLVQEQLLAILPEAARA.

In terms of assembly, interacts with ZNF202.

Its subcellular location is the nucleus. Functionally, may regulate transcriptional activity. This chain is SCAN domain-containing protein 1 (SCAND1), found in Pan paniscus (Pygmy chimpanzee).